The primary structure comprises 314 residues: Ribosomal protein L11 methyltransferase (314 aa).

Residues T161, G182, D204, and N248 each coordinate S-adenosyl-L-methionine.

It belongs to the methyltransferase superfamily. PrmA family.

The protein localises to the cytoplasm. It carries out the reaction L-lysyl-[protein] + 3 S-adenosyl-L-methionine = N(6),N(6),N(6)-trimethyl-L-lysyl-[protein] + 3 S-adenosyl-L-homocysteine + 3 H(+). Its function is as follows. Methylates ribosomal protein L11. In Listeria monocytogenes serotype 4b (strain CLIP80459), this protein is Ribosomal protein L11 methyltransferase.